The primary structure comprises 247 residues: MSHLTVSKILEDPFSALSLSEMLKILAALGWSTNYLAMAHRTHADRLPAIAVLPLCCDIAWEFTYAWIYPQASGHWQGVVRVWFFLHTAVLAATLRYAPNDWAGTPLGKSRARLVLLYVAVIGAFAAGQLCLALEMGGALGFHWGGALCQFLSSSGAVGQLLTRGHTRGASLVIWGARAISTAGGFVKLCIRFQHQVDGAPWLDSPMCWFYIGIVLSLDASYPVLYQLTRRHEEASGRGNSGKVKNR.

Transmembrane regions (helical) follow at residues 49-69 (AIAVLPLCCDIAWEFTYAWIY), 75-95 (HWQGVVRVWFFLHTAVLAATL), 114-134 (LVLLYVAVIGAFAAGQLCLAL), 138-158 (GALGFHWGGALCQFLSSSGAV), 171-191 (SLVIWGARAISTAGGFVKLCI), and 206-226 (PMCWFYIGIVLSLDASYPVLY).

It belongs to the paxB family.

The protein resides in the membrane. The protein operates within secondary metabolite biosynthesis; terpenoid biosynthesis. Its function is as follows. Terpene cyclase; part of the gene cluster that mediates the biosynthesis of calidodehydroaustin, a fungal meroterpenoid. The first step of the pathway is the synthesis of 3,5-dimethylorsellinic acid by the polyketide synthase ausA. 3,5-dimethylorsellinic acid is then prenylated by the polyprenyl transferase ausN. Further epoxidation by the FAD-dependent monooxygenase ausM and cyclization by the probable terpene cyclase ausL lead to the formation of protoaustinoid A. Protoaustinoid A is then oxidized to spiro-lactone preaustinoid A3 by the combined action of the FAD-binding monooxygenases ausB and ausC, and the dioxygenase ausE. Acid-catalyzed keto-rearrangement and ring contraction of the tetraketide portion of preaustinoid A3 by ausJ lead to the formation of preaustinoid A4. The aldo-keto reductase ausK, with the help of ausH, is involved in the next step by transforming preaustinoid A4 into isoaustinone which is in turn hydroxylated by the P450 monooxygenase ausI to form austinolide. The cytochrome P450 monooxygenase ausG modifies austinolide to austinol. Austinol is further acetylated to austin by the O-acetyltransferase ausP, which spontaneously changes to dehydroaustin. The cytochrome P450 monooxygenase ausR then converts dehydroaustin is into 7-dehydrodehydroaustin. The hydroxylation catalyzed by ausR permits the O-acetyltransferase ausQ to add an additional acetyl group to the molecule, leading to the formation of acetoxydehydroaustin. The short chain dehydrogenase ausT catalyzes the reduction of the double bond present between carbon atoms 1 and 2 to convert 7-dehydrodehydroaustin into 1,2-dihydro-7-hydroxydehydroaustin. AusQ catalyzes not only an acetylation reaction but also the addition of the PKS ausV diketide product to 1,2-dihydro-7-hydroxydehydroaustin, forming precalidodehydroaustin. Finally, the iron/alpha-ketoglutarate-dependent dioxygenase converts precalidodehydroaustin into calidodehydroaustin. The protein is Terpene cyclase ausL of Aspergillus calidoustus.